The chain runs to 1865 residues: Endoribonuclease Dicer (1865 aa).

The region spanning 41 to 213 is the Helicase ATP-binding domain; the sequence is LLEAALEHNT…DLEEKIQNLE (173 aa). 54 to 61 provides a ligand contact to ATP; the sequence is LNTGSGKT. The DECH box signature appears at 161–164; the sequence is DECH. The disordered stretch occupies residues 397-417; sequence SWSDSEDDDEDEEAEAKEKTE. The span at 400–411 shows a compositional bias: acidic residues; the sequence is DSEDDDEDEEAE. Positions 419–588 constitute a Helicase C-terminal domain; it reads NFPSPFTNIL…SAECNDFELE (170 aa). The Dicer dsRNA-binding fold domain maps to 616-708; sequence AIGHVNRYCA…MPVGKETVKY (93 aa). The interval 713–732 is disordered; that stretch reads DLHDEEETSVPGRPGSTKRR. In terms of domain architecture, PAZ spans 881-1028; sequence KFMEDIEKSE…LVPELCAIHP (148 aa). 2 stretches are compositionally biased toward polar residues: residues 1111 to 1128 and 1192 to 1201; these read GTSS…SMEV and STQTTTSVSV. Disordered regions lie at residues 1111–1142 and 1190–1259; these read GTSS…PDEK and DLST…DCRS. Residues 1240–1252 show a composition bias toward low complexity; sequence SETATSTPAPSET. The region spanning 1262–1385 is the RNase III 1 domain; the sequence is AGPAWDSPKT…TDKWDSDENK (124 aa). Mg(2+)-binding residues include glutamate 1298, aspartate 1377, and aspartate 1380. Residues 1373 to 1417 are disordered; the sequence is KSSTDKWDSDENKDLANGKASDDEDEDDDDEPEEAEVEPSKEDVN. Basic and acidic residues predominate over residues 1374-1388; that stretch reads SSTDKWDSDENKDLA. The span at 1394-1409 shows a compositional bias: acidic residues; it reads DDEDEDDDDEPEEAEV. An RNase III 2 domain is found at 1609–1767; the sequence is FLNFESKINY…LAGAIYMDSG (159 aa). Positions 1648, 1753, and 1756 each coordinate Mg(2+). The region spanning 1792-1857 is the DRBM domain; sequence VPRSPVRELL…ARRALRSLKA (66 aa).

Belongs to the helicase family. Dicer subfamily. Component of the RISC loading complex (RLC), or micro-RNA (miRNA) loading complex (miRLC), which is composed of dicer1, ago2 and tarbp2; dicer1 and tarbp2 are required to process precursor miRNAs (pre-miRNAs) to mature miRNAs and then load them onto ago2. Note that the trimeric RLC/miRLC is also referred to as RISC. Requires Mg(2+) as cofactor. Mn(2+) serves as cofactor.

It localises to the cytoplasm. The enzyme catalyses Endonucleolytic cleavage to 5'-phosphomonoester.. In terms of biological role, double-stranded RNA (dsRNA) endoribonuclease playing a central role in short dsRNA-mediated post-transcriptional gene silencing. Cleaves naturally occurring long dsRNAs and short hairpin pre-microRNAs (miRNA) into fragments of twenty-one to twenty-three nucleotides with 3' overhang of two nucleotides, producing respectively short interfering RNAs (siRNA) and mature microRNAs. SiRNAs and miRNAs serve as guide to direct the RNA-induced silencing complex (RISC) to complementary RNAs to degrade them or prevent their translation. Gene silencing mediated by siRNAs, also called RNA interference, controls the elimination of transcripts from mobile and repetitive DNA elements of the genome but also the degradation of exogenous RNA of viral origin for instance. The miRNA pathway on the other side is a mean to specifically regulate the expression of target genes. The chain is Endoribonuclease Dicer (dicer1) from Danio rerio (Zebrafish).